The sequence spans 224 residues: Charged multivesicular body protein 4c (224 aa).

Disordered regions lie at residues 1–21 (MSVFGKLFGGGGKGGKGPTPQ) and 182–224 (SGPE…AWAM). Residues 7-17 (LFGGGGKGGKG) are compositionally biased toward gly residues. Residues 21–221 (QEAIQKLRET…DEDDMEELKA (201 aa)) adopt a coiled-coil conformation.

The protein belongs to the SNF7 family. Probable core component of the endosomal sorting required for transport complex III (ESCRT-III). ESCRT-III components are thought to multimerize to form a flat lattice on the perimeter membrane of the endosome.

Its subcellular location is the cytoplasm. It localises to the cytosol. The protein resides in the late endosome membrane. Functionally, probable core component of the endosomal sorting required for transport complex III (ESCRT-III) which is involved in multivesicular bodies (MVBs) formation and sorting of endosomal cargo proteins into MVBs. MVBs contain intraluminal vesicles (ILVs) that are generated by invagination and scission from the limiting membrane of the endosome and mostly are delivered to lysosomes enabling degradation of membrane proteins, such as stimulated growth factor receptors, lysosomal enzymes and lipids. Key component of the cytokinesis checkpoint, a process required to delay abscission to prevent both premature resolution of intercellular chromosome bridges and accumulation of DNA damage. This Danio rerio (Zebrafish) protein is Charged multivesicular body protein 4c (chmp4c).